The chain runs to 336 residues: UPF0324 membrane protein PM1461 (336 aa).

The next 10 membrane-spanning stretches (helical) occupy residues T5–L23, L30–Y52, G62–L84, G91–G113, I123–M140, V153–Y175, M221–L238, I250–I271, I275–T297, and P310–I332.

Belongs to the UPF0324 family.

It is found in the cell membrane. This is UPF0324 membrane protein PM1461 from Pasteurella multocida (strain Pm70).